A 212-amino-acid chain; its full sequence is uncharacterized protein (212 aa).

Belongs to the methyltransferase superfamily.

This is an uncharacterized protein from Synechocystis sp. (strain ATCC 27184 / PCC 6803 / Kazusa).